A 695-amino-acid polypeptide reads, in one-letter code: Methionine synthase reductase (695 aa).

In terms of domain architecture, Flavodoxin-like spans Phe4–Trp147. Residues Thr10–Gln14 and Leu93–Tyr124 each bind FMN. Residues Thr166–Pro245 form a hinge region. Residues Ser171 and Ser187 each carry the phosphoserine modification. The 263-residue stretch at Asp269–Pro531 folds into the FAD-binding FR-type domain. Lys289 contacts NADP(+). FAD contacts are provided by residues Arg449–Ser452 and Gly485–Thr488. NADP(+) is bound by residues Ser608 to Arg609, Tyr622 to Gln624, and Asp657. Trp695 is a binding site for FAD.

Forms a multiprotein complex with MMACHC, MMADHC and MTR. FAD is required as a cofactor. It depends on FMN as a cofactor.

The protein localises to the cytoplasm. The enzyme catalyses 2 methylcob(III)alamin-[methionine synthase] + 2 S-adenosyl-L-homocysteine + NADP(+) + H(+) = 2 cob(II)alamin-[methionine synthase] + 2 S-adenosyl-L-methionine + NADPH. The catalysed reaction is 2 cob(II)alamin + A + 2 H2O + 2 H(+) = 2 aquacob(III)alamin + AH2. Its function is as follows. Key enzyme in methionine and folate homeostasis responsible for the reactivation of methionine synthase (MTR/MS) activity by catalyzing the reductive methylation of MTR-bound cob(II)alamin. Cobalamin (vitamin B12) forms a complex with MTR to serve as an intermediary in methyl transfer reactions that cycles between MTR-bound methylcob(III)alamin and MTR bound-cob(I)alamin forms, and occasional oxidative escape of the cob(I)alamin intermediate during the catalytic cycle leads to the inactive cob(II)alamin species. The processing of cobalamin in the cytosol occurs in a multiprotein complex composed of at least MMACHC, MMADHC, MTRR and MTR which may contribute to shuttle safely and efficiently cobalamin towards MTR in order to produce methionine. Also necessary for the utilization of methyl groups from the folate cycle, thereby affecting transgenerational epigenetic inheritance. Also acts as a molecular chaperone for methionine synthase by stabilizing apoMTR and incorporating methylcob(III)alamin into apoMTR to form the holoenzyme. Also serves as an aquacob(III)alamin reductase by reducing aquacob(III)alamin to cob(II)alamin; this reduction leads to stimulation of the conversion of apoMTR and aquacob(III)alamin to MTR holoenzyme. The polypeptide is Methionine synthase reductase (MTRR) (Bos taurus (Bovine)).